The primary structure comprises 268 residues: uncharacterized protein (268 aa).

A helical transmembrane segment spans residues 150 to 172 (LYSIADFLAYTFTYFYLATVGLA).

Its subcellular location is the host membrane. This is an uncharacterized protein from Sulfolobus islandicus rod-shaped virus 1 (SIRV-1).